The chain runs to 405 residues: Argininosuccinate synthase (405 aa).

ATP-binding positions include 10-18 and Ala-37; that span reads AYSGGLDTS. 2 residues coordinate L-citrulline: Tyr-88 and Ser-93. Residue Gly-118 coordinates ATP. L-aspartate is bound by residues Thr-120, Asn-124, and Asp-125. Asn-124 serves as a coordination point for L-citrulline. Residues Arg-128, Ser-177, Ser-186, Glu-263, and Tyr-275 each contribute to the L-citrulline site.

This sequence belongs to the argininosuccinate synthase family. Type 1 subfamily. As to quaternary structure, homotetramer.

It is found in the cytoplasm. It catalyses the reaction L-citrulline + L-aspartate + ATP = 2-(N(omega)-L-arginino)succinate + AMP + diphosphate + H(+). The protein operates within amino-acid biosynthesis; L-arginine biosynthesis; L-arginine from L-ornithine and carbamoyl phosphate: step 2/3. The polypeptide is Argininosuccinate synthase (Acetivibrio thermocellus (strain ATCC 27405 / DSM 1237 / JCM 9322 / NBRC 103400 / NCIMB 10682 / NRRL B-4536 / VPI 7372) (Clostridium thermocellum)).